A 476-amino-acid polypeptide reads, in one-letter code: mRNA cap guanine-N(7) methyltransferase (476 aa).

Basic and acidic residues predominate over residues 1–14 (MANSAKAEEYEKMS). Positions 1 to 146 (MANSAKAEEY…KQKNLEEGHS (146 aa)) are disordered. The segment covering 20–50 (ASVNSETESSFNINENTTASGTGLSEKTSVC) has biased composition (polar residues). Phosphoserine occurs at positions 24, 28, and 29. Composition is skewed to basic and acidic residues over residues 54 to 68 (DIARKRKEFEDDLVK) and 84 to 118 (LDPEIVPEEKDCGDAEGNSKKRKRETEDVPKDKSS). The residue at position 118 (serine 118) is a Phosphoserine. Residues 126–128 (KRK) carry the Nuclear localization signal motif. Residues 129-145 (IALEDVPEKQKNLEEGH) are compositionally biased toward basic and acidic residues. Positions 167 to 475 (SRIFYLRNFN…IYLVFAFEKQ (309 aa)) constitute an mRNA cap 0 methyltransferase domain. 176–177 (NN) is a binding site for mRNA. Residues lysine 180, glycine 205, aspartate 227, aspartate 261, glutamine 284, and tyrosine 289 each contribute to the S-adenosyl-L-methionine site.

Belongs to the class I-like SAM-binding methyltransferase superfamily. mRNA cap 0 methyltransferase family. In terms of assembly, interacts with importin alpha, leading to stimulate both RNA-binding and methyltransferase activity. Interaction with importin alpha and beta is required for its nuclear localization, importin beta dissociating in response to RanGTP, allowing RNMT-importin alpha to bind RNA substrates. Interacts with elongating form of polymerase II and RNGTT. Interacts with RAMAC, this interaction significantly enhances RNA-binding and cap methyltransferase activity. Widely expressed.

It is found in the nucleus. It catalyses the reaction a 5'-end (5'-triphosphoguanosine)-ribonucleoside in mRNA + S-adenosyl-L-methionine = a 5'-end (N(7)-methyl 5'-triphosphoguanosine)-ribonucleoside in mRNA + S-adenosyl-L-homocysteine. Methyltransferase activity is activated by RAMAC. Functionally, catalytic subunit of the mRNA-capping methyltransferase RNMT:RAMAC complex that methylates the N7 position of the added guanosine to the 5'-cap structure of mRNAs. Binds RNA containing 5'-terminal GpppC. This chain is mRNA cap guanine-N(7) methyltransferase (RNMT), found in Homo sapiens (Human).